The following is a 71-amino-acid chain: DNA-directed RNA polymerase subunit Rpo10 (71 aa).

Zn(2+)-binding residues include Cys6, Cys9, Cys52, and Cys53.

It belongs to the archaeal Rpo10/eukaryotic RPB10 RNA polymerase subunit family. In terms of assembly, part of the RNA polymerase complex. Zn(2+) is required as a cofactor.

Its subcellular location is the cytoplasm. The catalysed reaction is RNA(n) + a ribonucleoside 5'-triphosphate = RNA(n+1) + diphosphate. Functionally, DNA-dependent RNA polymerase (RNAP) catalyzes the transcription of DNA into RNA using the four ribonucleoside triphosphates as substrates. The sequence is that of DNA-directed RNA polymerase subunit Rpo10 from Methanocella arvoryzae (strain DSM 22066 / NBRC 105507 / MRE50).